The sequence spans 192 residues: Fe/S biogenesis protein NfuA (192 aa).

Residues cysteine 149 and cysteine 152 each coordinate [4Fe-4S] cluster.

This sequence belongs to the NfuA family. Homodimer. [4Fe-4S] cluster is required as a cofactor.

In terms of biological role, involved in iron-sulfur cluster biogenesis. Binds a 4Fe-4S cluster, can transfer this cluster to apoproteins, and thereby intervenes in the maturation of Fe/S proteins. Could also act as a scaffold/chaperone for damaged Fe/S proteins. This chain is Fe/S biogenesis protein NfuA, found in Proteus mirabilis (strain HI4320).